We begin with the raw amino-acid sequence, 116 residues long: Glycine-rich protein 3 short isoform (116 aa).

The N-terminal stretch at 1-24 is a signal peptide; that stretch reads MASKTLLLLGLFAFLFIVSEMAAA. The interval 27 to 83 is disordered; that stretch reads VKSESEETVKPEQHGGGFGDNGGGRYQGGGGHGGHGGGGYQGGGGRYQGGGGRQGGG. A compositionally biased stretch (basic and acidic residues) spans 29–39; the sequence is SESEETVKPEQ. Positions 40–83 are enriched in gly residues; that stretch reads HGGGFGDNGGGRYQGGGGHGGHGGGGYQGGGGRYQGGGGRQGGG. Tandem repeats lie at residues 54–59, 62–67, 68–73, 75–80, and 81–86. Residues 54–86 form a 5 X 6 AA tandem repeats of G-G-G-G-[HYRS]-[GYQ] region; sequence GGGGHGGHGGGGYQGGGGRYQGGGGRQGGGGSY.

It belongs to the GRP family. Interacts with WAK1 (via the extracellular domain). Component of a 500 kDa complex, composed of GRP3 or GRP3-S, WAK1 and KAPP.

It is found in the secreted. The protein localises to the extracellular space. It localises to the extracellular matrix. In terms of biological role, regulates the function of the receptor protein kinase WAK1. The chain is Glycine-rich protein 3 short isoform (GRP3S) from Arabidopsis thaliana (Mouse-ear cress).